A 392-amino-acid chain; its full sequence is MRTLRRNVTENRLTISRRRTEKKTSPNKTEKSVQIPVDIIIEILLRLPAKSIATCRCVSKLWISVICRQDFTELFLTRSLHRPQLLFCCKKDGNLFFFSSPQLQNPYENSSAISLKNFSLCYKISRPVNGLICFKRKEMNETVTVICNPSTGHTLSLPKPMKTSIGPSRFFVYEPIQKQFKVLLSYKSDEHQVLTLGTGELSWRIIECSMPHILGMSEICINGVLYYPAINLSSGDYIIVCFDVRSEKFRFITVMEEFIKAAHDGTLINYNGKLASLVSERYCFVDGRSKSIELWVLQDAEKKEWSKHTYVLPAWWQHRIGTLNLRFVGVTRTNEIMLSPCYQTVPFDVYYFNIERKTMMSVAIQGMEAFQGHLVFTYLDHVENVKLLHNMF.

One can recognise an F-box domain in the interval 29 to 78 (TEKSVQIPVDIIIEILLRLPAKSIATCRCVSKLWISVICRQDFTELFLTR).

This chain is F-box protein At5g65850, found in Arabidopsis thaliana (Mouse-ear cress).